Consider the following 652-residue polypeptide: Type III restriction-modification enzyme StyLTI Mod subunit (652 aa).

The tract at residues 135–138 (DPPY) is binding of S-adenosyl methionine.

It belongs to the N(4)/N(6)-methyltransferase family. In terms of assembly, homodimer, also forms a functional restriction-competent complex with Res.

It catalyses the reaction a 2'-deoxyadenosine in DNA + S-adenosyl-L-methionine = an N(6)-methyl-2'-deoxyadenosine in DNA + S-adenosyl-L-homocysteine + H(+). In terms of biological role, a beta subtype methylase that binds the system-specific DNA recognition site 5'-CAGAG-3' and methylates A-4 (of only 1 strand as the other does not have an A residue). DNA restriction requires both the Res and Mod subunits. This Salmonella typhimurium (strain LT2 / SGSC1412 / ATCC 700720) protein is Type III restriction-modification enzyme StyLTI Mod subunit.